Here is a 273-residue protein sequence, read N- to C-terminus: MSDMHSLLIAAILGVVEGLTEFLPVSSTGHMIIVGHLLGFEGDTAKTFEVVIQLGSILAVVVMFWRRLFGLIGIHFGRPLQREGESKGRLTLIHILLGMIPAVVLGLVFHDTIKSLFNPINVMYALVVGGLLLIAAECLKPKEPRAPGLDDMTYRQAFMIGCFQCLALWPGFSRSGATISGGMLMGVSRYAASEFSFLLAVPMMMGATVLDLYKSWSFLTAADIPMFAVGFVTAFVVALIAIKTFLQLIKRISFIPFAIYRFVVAAAVYVVFF.

7 consecutive transmembrane segments (helical) span residues 6 to 26 (SLLI…LPVS), 45 to 65 (AKTF…VMFW), 90 to 110 (LTLI…LVFH), 116 to 136 (LFNP…LIAA), 190 to 210 (YAAS…ATVL), 222 to 242 (ADIP…LIAI), and 252 to 272 (ISFI…YVVF).

It belongs to the UppP family.

The protein resides in the cell inner membrane. The catalysed reaction is di-trans,octa-cis-undecaprenyl diphosphate + H2O = di-trans,octa-cis-undecaprenyl phosphate + phosphate + H(+). Catalyzes the dephosphorylation of undecaprenyl diphosphate (UPP). Confers resistance to bacitracin. The polypeptide is Undecaprenyl-diphosphatase (Salmonella heidelberg (strain SL476)).